Here is a 92-residue protein sequence, read N- to C-terminus: Small ribosomal subunit protein uS19 (92 aa).

It belongs to the universal ribosomal protein uS19 family.

Its function is as follows. Protein S19 forms a complex with S13 that binds strongly to the 16S ribosomal RNA. The protein is Small ribosomal subunit protein uS19 of Caulobacter sp. (strain K31).